The following is a 381-amino-acid chain: Queuine tRNA-ribosyltransferase (381 aa).

The active-site Proton acceptor is the Asp92. Substrate contacts are provided by residues 92–96 (DSGGF), Asp146, Gln190, and Gly217. Residues 248–254 (GVGRPED) form an RNA binding region. Asp267 (nucleophile) is an active-site residue. The tract at residues 272–276 (TRNAR) is RNA binding; important for wobble base 34 recognition. The Zn(2+) site is built by Cys305, Cys307, Cys310, and His337.

This sequence belongs to the queuine tRNA-ribosyltransferase family. In terms of assembly, homodimer. Within each dimer, one monomer is responsible for RNA recognition and catalysis, while the other monomer binds to the replacement base PreQ1. The cofactor is Zn(2+).

The enzyme catalyses 7-aminomethyl-7-carbaguanine + guanosine(34) in tRNA = 7-aminomethyl-7-carbaguanosine(34) in tRNA + guanine. It functions in the pathway tRNA modification; tRNA-queuosine biosynthesis. Functionally, catalyzes the base-exchange of a guanine (G) residue with the queuine precursor 7-aminomethyl-7-deazaguanine (PreQ1) at position 34 (anticodon wobble position) in tRNAs with GU(N) anticodons (tRNA-Asp, -Asn, -His and -Tyr). Catalysis occurs through a double-displacement mechanism. The nucleophile active site attacks the C1' of nucleotide 34 to detach the guanine base from the RNA, forming a covalent enzyme-RNA intermediate. The proton acceptor active site deprotonates the incoming PreQ1, allowing a nucleophilic attack on the C1' of the ribose to form the product. After dissociation, two additional enzymatic reactions on the tRNA convert PreQ1 to queuine (Q), resulting in the hypermodified nucleoside queuosine (7-(((4,5-cis-dihydroxy-2-cyclopenten-1-yl)amino)methyl)-7-deazaguanosine). The chain is Queuine tRNA-ribosyltransferase from Xanthomonas campestris pv. campestris (strain 8004).